Consider the following 432-residue polypeptide: 5'-deoxyadenosine deaminase (432 aa).

The Zn(2+) site is built by histidine 63 and histidine 65. Residues glutamate 92 and histidine 184 each contribute to the substrate site. Residue histidine 211 participates in Zn(2+) binding. Residues glutamate 214 and aspartate 299 each coordinate substrate. Position 299 (aspartate 299) interacts with Zn(2+).

The protein belongs to the metallo-dependent hydrolases superfamily. MTA/SAH deaminase family. Homotetramer. Zn(2+) serves as cofactor.

It catalyses the reaction 5'-deoxyadenosine + H2O + H(+) = 5'-deoxyinosine + NH4(+). It carries out the reaction S-adenosyl-L-homocysteine + H2O + H(+) = S-inosyl-L-homocysteine + NH4(+). The enzyme catalyses S-methyl-5'-thioadenosine + H2O + H(+) = S-methyl-5'-thioinosine + NH4(+). The catalysed reaction is adenosine + H2O + H(+) = inosine + NH4(+). It functions in the pathway amino-acid biosynthesis; S-adenosyl-L-methionine biosynthesis. Functionally, catalyzes the deamination of three SAM-derived enzymatic products, namely 5'-deoxyadenosine, S-adenosyl-L-homocysteine, and 5'-methylthioadenosine, to produce the inosine analogs. Can also deaminate adenosine. The preferred substrate for this enzyme is 5'-deoxyadenosine, but all these substrates are efficiently deaminated. Likely functions in a S-adenosyl-L-methionine (SAM) recycling pathway from S-adenosyl-L-homocysteine (SAH) produced from SAM-dependent methylation reactions. May also be involved in the recycling of 5'-deoxyadenosine, whereupon the 5'-deoxyribose moiety of 5'-deoxyinosine is further metabolized to deoxyhexoses used for the biosynthesis of aromatic amino acids in methanogens. The chain is 5'-deoxyadenosine deaminase from Methanosarcina barkeri (strain Fusaro / DSM 804).